Here is an 87-residue protein sequence, read N- to C-terminus: UPF0729 protein C18orf32 homolog (87 aa).

The protein belongs to the UPF0729 family.

This Esox lucius (Northern pike) protein is UPF0729 protein C18orf32 homolog.